An 89-amino-acid polypeptide reads, in one-letter code: Small ribosomal subunit protein uS15 (89 aa).

This sequence belongs to the universal ribosomal protein uS15 family. Part of the 30S ribosomal subunit. Forms a bridge to the 50S subunit in the 70S ribosome, contacting the 23S rRNA.

In terms of biological role, one of the primary rRNA binding proteins, it binds directly to 16S rRNA where it helps nucleate assembly of the platform of the 30S subunit by binding and bridging several RNA helices of the 16S rRNA. Functionally, forms an intersubunit bridge (bridge B4) with the 23S rRNA of the 50S subunit in the ribosome. The chain is Small ribosomal subunit protein uS15 from Bradyrhizobium sp. (strain BTAi1 / ATCC BAA-1182).